Here is a 179-residue protein sequence, read N- to C-terminus: Natural killer cells antigen CD94 (179 aa).

Residues 1–10 (MAVFKTTLWR) are Cytoplasmic-facing. The chain crosses the membrane as a helical; Signal-anchor for type II membrane protein span at residues 11–31 (LISGTLGIICLSLMATLGILL). Over 32-179 (KNSFTKLSVE…NRYICKQQLI (148 aa)) the chain is Extracellular. 2 disulfides stabilise this stretch: Cys58–Cys70 and Cys61–Cys72. The 108-residue stretch at 68–175 (YRCNCYFISS…CETKNRYICK (108 aa)) folds into the C-type lectin domain. 2 N-linked (GlcNAc...) asparagine glycosylation sites follow: Asn83 and Asn132. Cystine bridges form between Cys89–Cys174 and Cys152–Cys166.

In terms of assembly, can form disulfide-bonded heterodimer with NKG2 family members KLRC1 and KLRC2. KLRD1-KLRC1 heterodimer interacts with peptide-bound MHC-E-B2M heterotrimeric complex. KLRD1 plays a prominent role in directly interacting with MHC-E. KLRD1-KLRC1 interacts with much higher affinity with peptide-bound MHC-E-B2M than KLRD1-KLRC2. Interacts with the adapter protein TYROBP/DAP12; this interaction is required for cell surface expression and cell activation. In terms of tissue distribution, natural killer cells.

Its subcellular location is the cell membrane. Functionally, immune receptor involved in self-nonself discrimination. In complex with KLRC1 or KLRC2 on cytotoxic and regulatory lymphocyte subsets, recognizes non-classical major histocompatibility (MHC) class Ib molecule MHC-E loaded with self-peptides derived from the signal sequence of classical MHC class Ia and non-classical MHC class Ib molecules. Enables cytotoxic cells to monitor the expression of MHC class I molecules in healthy cells and to tolerate self. Primarily functions as a ligand binding subunit as it lacks the capacity to signal. KLRD1-KLRC1 acts as an immune inhibitory receptor. Key inhibitory receptor on natural killer (NK) cells that regulates their activation and effector functions. Dominantly counteracts T cell receptor signaling on a subset of memory/effector CD8-positive T cells as part of an antigen-driven response to avoid autoimmunity. On intraepithelial CD8-positive gamma-delta regulatory T cells triggers TGFB1 secretion, which in turn limits the cytotoxic programming of intraepithelial CD8-positive alpha-beta T cells, distinguishing harmless from pathogenic antigens. In MHC-E-rich tumor microenvironment, acts as an immune inhibitory checkpoint and may contribute to progressive loss of effector functions of NK cells and tumor-specific T cells, a state known as cell exhaustion. Upon MHC-E-peptide binding, transmits intracellular signals through KLRC1 immunoreceptor tyrosine-based inhibition motifs (ITIMs) by recruiting INPP5D/SHIP-1 and INPPL1/SHIP-2 tyrosine phosphatases to ITIMs, and ultimately opposing signals transmitted by activating receptors through dephosphorylation of proximal signaling molecules. Its function is as follows. KLRD1-KLRC2 acts as an immune activating receptor. On cytotoxic lymphocyte subsets recognizes MHC-E loaded with signal sequence-derived peptides from non-classical MHC class Ib MHC-G molecules, likely playing a role in the generation and effector functions of adaptive NK cells and in maternal-fetal tolerance during pregnancy. Regulates the effector functions of terminally differentiated cytotoxic lymphocyte subsets, and in particular may play a role in adaptive NK cell response to viral infection. Upon MHC-E-peptide binding, transmits intracellular signals via the adapter protein TYROBP/DAP12, triggering the phosphorylation of proximal signaling molecules and cell activation. This Macaca mulatta (Rhesus macaque) protein is Natural killer cells antigen CD94 (KLRD1).